The sequence spans 575 residues: uncharacterized protein (575 aa).

The protein localises to the cytoplasm. Its subcellular location is the cytoskeleton. It localises to the microtubule organizing center. The protein resides in the spindle pole body. This is an uncharacterized protein from Schizosaccharomyces pombe (strain 972 / ATCC 24843) (Fission yeast).